Reading from the N-terminus, the 376-residue chain is Adipocyte plasma membrane-associated protein (376 aa).

Residues 1-17 (MTFLMLAVSLAIPLLGA) traverse the membrane as a helical segment. A glycan (N-linked (GlcNAc...) asparagine) is linked at Asn-120.

This sequence belongs to the strictosidine synthase family.

It is found in the membrane. Functionally, exhibits strong arylesterase activity with beta-naphthyl acetate and phenyl acetate. May play a role in adipocyte differentiation. The chain is Adipocyte plasma membrane-associated protein (Apmap) from Rattus norvegicus (Rat).